The following is a 173-amino-acid chain: Endoribonuclease YbeY (173 aa).

3 residues coordinate Zn(2+): His120, His124, and His130.

The protein belongs to the endoribonuclease YbeY family. Requires Zn(2+) as cofactor.

It localises to the cytoplasm. In terms of biological role, single strand-specific metallo-endoribonuclease involved in late-stage 70S ribosome quality control and in maturation of the 3' terminus of the 16S rRNA. This chain is Endoribonuclease YbeY, found in Kineococcus radiotolerans (strain ATCC BAA-149 / DSM 14245 / SRS30216).